A 232-amino-acid polypeptide reads, in one-letter code: MSNMSMTLRDVPNRERPRERLLHEGAHALSNQEIVAIMLRTGTKNESVLQLAQHVLCHFDGLRLLREATVEELTSIHGIGEAKAIEFCAAIELGRRIHTMQEMDRYVIRTPEDVSRFVMEEMRFLSQENFVCLYLNTKNQVLHKQTVFIGSLNASIVHPREVFKEALRRSAASLICLHNHPSGDPTPSREDIEVTHRLAQVGKLIGIELLDHVIIGDRTFVSLKEKGHLPFS.

Residues 107 to 229 form the MPN domain; the sequence is VIRTPEDVSR…FVSLKEKGHL (123 aa). Residues histidine 178, histidine 180, and aspartate 191 each coordinate Zn(2+). Positions 178 to 191 match the JAMM motif motif; sequence HNHPSGDPTPSRED.

Belongs to the UPF0758 family.

The protein is UPF0758 protein BH3032 of Halalkalibacterium halodurans (strain ATCC BAA-125 / DSM 18197 / FERM 7344 / JCM 9153 / C-125) (Bacillus halodurans).